We begin with the raw amino-acid sequence, 34 residues long: Beta/mu-theraphotoxin-Pe1b (34 aa).

Intrachain disulfides connect cysteine 2–cysteine 16, cysteine 9–cysteine 21, and cysteine 15–cysteine 28.

Belongs to the neurotoxin 10 (Hwtx-1) family. 54 (ProTx-1) subfamily. Expressed by the venom gland.

The protein localises to the secreted. Ion channel impairing toxin that inhibits several voltage-gated sodium channels. It acts by inhibiting the inward component of the sodium current and by shifting the voltage dependence of channel activation to more depolarized potentials. Its most potent activity is on Nav1.7/SCN9A (IC(50)=167 nM), followed by Nav1.6/SCN8A (IC(50)=696 nM), and Nav1.2/SCN2A (IC(50)=3.54 uM). In Phormingochilus everetti (Malaysian purple earth tiger tarantula), this protein is Beta/mu-theraphotoxin-Pe1b.